Here is a 272-residue protein sequence, read N- to C-terminus: Shikimate dehydrogenase (NADP(+)) (272 aa).

Shikimate-binding positions include 14–16 (SKS) and Thr61. Lys65 acts as the Proton acceptor in catalysis. Glu77 provides a ligand contact to NADP(+). Shikimate-binding residues include Asn86 and Asp102. NADP(+)-binding positions include 126–130 (GAGGA), 149–154 (NRTASR), and Met213. Tyr215 provides a ligand contact to shikimate. Gly237 contributes to the NADP(+) binding site.

The protein belongs to the shikimate dehydrogenase family. In terms of assembly, homodimer.

The catalysed reaction is shikimate + NADP(+) = 3-dehydroshikimate + NADPH + H(+). The protein operates within metabolic intermediate biosynthesis; chorismate biosynthesis; chorismate from D-erythrose 4-phosphate and phosphoenolpyruvate: step 4/7. Involved in the biosynthesis of the chorismate, which leads to the biosynthesis of aromatic amino acids. Catalyzes the reversible NADPH linked reduction of 3-dehydroshikimate (DHSA) to yield shikimate (SA). The sequence is that of Shikimate dehydrogenase (NADP(+)) from Salmonella paratyphi A (strain ATCC 9150 / SARB42).